The chain runs to 195 residues: Holliday junction branch migration complex subunit RuvA (195 aa).

A domain I region spans residues 1–63 (MIASVRGEVI…EDSMTLYGFV (63 aa)). Positions 64 to 142 (DGDARDLFLT…PVSAGGGAAV (79 aa)) are domain II. A flexible linker region spans residues 143 to 150 (GGHAIRGP). Residues 150–195 (PVVEALVGLGFAAKQAEEATDKVLANDPEATTSSALRAALSMLGKK) are domain III.

The protein belongs to the RuvA family. As to quaternary structure, homotetramer. Forms an RuvA(8)-RuvB(12)-Holliday junction (HJ) complex. HJ DNA is sandwiched between 2 RuvA tetramers; dsDNA enters through RuvA and exits via RuvB. An RuvB hexamer assembles on each DNA strand where it exits the tetramer. Each RuvB hexamer is contacted by two RuvA subunits (via domain III) on 2 adjacent RuvB subunits; this complex drives branch migration. In the full resolvosome a probable DNA-RuvA(4)-RuvB(12)-RuvC(2) complex forms which resolves the HJ.

The protein localises to the cytoplasm. Its function is as follows. The RuvA-RuvB-RuvC complex processes Holliday junction (HJ) DNA during genetic recombination and DNA repair, while the RuvA-RuvB complex plays an important role in the rescue of blocked DNA replication forks via replication fork reversal (RFR). RuvA specifically binds to HJ cruciform DNA, conferring on it an open structure. The RuvB hexamer acts as an ATP-dependent pump, pulling dsDNA into and through the RuvAB complex. HJ branch migration allows RuvC to scan DNA until it finds its consensus sequence, where it cleaves and resolves the cruciform DNA. This is Holliday junction branch migration complex subunit RuvA from Mycolicibacterium smegmatis (strain ATCC 700084 / mc(2)155) (Mycobacterium smegmatis).